Here is a 753-residue protein sequence, read N- to C-terminus: 5-methyltetrahydropteroyltriglutamate--homocysteine methyltransferase (753 aa).

5-methyltetrahydropteroyltri-L-glutamate is bound by residues 17–20 (RELK) and lysine 117. Residues 431–433 (IGS) and glutamate 484 contribute to the L-homocysteine site. L-methionine is bound by residues 431-433 (IGS) and glutamate 484. Residues 515-516 (RC) and tryptophan 561 each bind 5-methyltetrahydropteroyltri-L-glutamate. L-homocysteine is bound at residue aspartate 599. Aspartate 599 contributes to the L-methionine binding site. Glutamate 605 is a binding site for 5-methyltetrahydropteroyltri-L-glutamate. The Zn(2+) site is built by histidine 641, cysteine 643, and glutamate 665. The Proton donor role is filled by histidine 694. Cysteine 726 serves as a coordination point for Zn(2+).

It belongs to the vitamin-B12 independent methionine synthase family. Requires Zn(2+) as cofactor.

It catalyses the reaction 5-methyltetrahydropteroyltri-L-glutamate + L-homocysteine = tetrahydropteroyltri-L-glutamate + L-methionine. Its pathway is amino-acid biosynthesis; L-methionine biosynthesis via de novo pathway; L-methionine from L-homocysteine (MetE route): step 1/1. Functionally, catalyzes the transfer of a methyl group from 5-methyltetrahydrofolate to homocysteine resulting in methionine formation. The protein is 5-methyltetrahydropteroyltriglutamate--homocysteine methyltransferase of Cronobacter sakazakii (strain ATCC BAA-894) (Enterobacter sakazakii).